Reading from the N-terminus, the 312-residue chain is MEKWNHTSNDFILLGLLPPNQTGIFLLCLIILIFFLASVGNSAMIHLIHVDPRLHTPMYFLLSQLSLMDLMYISTTVPKMAYNFLSGQKGISFLGCGVQSFFFLTMACSEGLLLTSMAYDRYLAICHSLYYPIRMSKMMCVKMIGGSWTLGSINSLAHTVFALHIPYCRSRAIDHFFCDVPAMLLLACTDTWVYEYMVFVSTSLFLLFPFIGITSSCGRVLFAVYHMHSKEGRKKAFTTISTHLTVVIFYYAPFVYTYLRPRNLRSPAEDKILAVFYTILTPMLNPIIYSLRNKEVLGAMRRVFGIFSFLKE.

Residues 1 to 24 lie on the Extracellular side of the membrane; the sequence is MEKWNHTSNDFILLGLLPPNQTGI. N-linked (GlcNAc...) asparagine glycosylation is found at Asn5 and Asn20. The helical transmembrane segment at 25-48 threads the bilayer; it reads FLLCLIILIFFLASVGNSAMIHLI. The Cytoplasmic segment spans residues 49-56; sequence HVDPRLHT. The helical transmembrane segment at 57 to 78 threads the bilayer; it reads PMYFLLSQLSLMDLMYISTTVP. Topologically, residues 79–99 are extracellular; it reads KMAYNFLSGQKGISFLGCGVQ. A disulfide bond links Cys96 and Cys188. Residues 100 to 119 traverse the membrane as a helical segment; it reads SFFFLTMACSEGLLLTSMAY. The Cytoplasmic portion of the chain corresponds to 120-138; the sequence is DRYLAICHSLYYPIRMSKM. The helical transmembrane segment at 139-157 threads the bilayer; the sequence is MCVKMIGGSWTLGSINSLA. Over 158-194 the chain is Extracellular; the sequence is HTVFALHIPYCRSRAIDHFFCDVPAMLLLACTDTWVY. The chain crosses the membrane as a helical span at residues 195-218; sequence EYMVFVSTSLFLLFPFIGITSSCG. Residues 219 to 235 lie on the Cytoplasmic side of the membrane; that stretch reads RVLFAVYHMHSKEGRKK. A helical membrane pass occupies residues 236–258; the sequence is AFTTISTHLTVVIFYYAPFVYTY. Residues 259–271 lie on the Extracellular side of the membrane; that stretch reads LRPRNLRSPAEDK. A helical transmembrane segment spans residues 272–291; that stretch reads ILAVFYTILTPMLNPIIYSL. The Cytoplasmic portion of the chain corresponds to 292-312; the sequence is RNKEVLGAMRRVFGIFSFLKE.

This sequence belongs to the G-protein coupled receptor 1 family.

The protein resides in the cell membrane. Odorant receptor. This chain is Olfactory receptor 2L13 (OR2L13), found in Homo sapiens (Human).